The following is a 396-amino-acid chain: Proton-coupled antiporter flippase LtaA (396 aa).

12 helical membrane-spanning segments follow: residues 15–34, 46–73, 80–99, 105–126, 138–159, 165–184, 211–231, 243–263, 275–297, 303–326, 338–358, and 370–390; these read FILMLIILFLMEFARGMYIL, IAVAITSLAFSIHFIADASTNFVIGFLL, IVLTTGFILAFTSLFLVIWF, VIIFSAMMLGIAVSPIWVIMLS, GYVYFSWLLGLLVGMVFMNLLI, RFAFMMSLVVLIAWILYYFV, LLLFPGILLQGAAIAALVPIL, TIEYTVAIIIGGIGCAVSMLF, FMYGVILSGFILYMILIFTLSMI, LWIIALAIGLMYGILLPAWNTFMA, WGVFNSIQGFGSMIGPLFGGL, and FYFSALIFLVLAVFYGSYFIV.

It belongs to the major facilitator superfamily. LtaA family.

It is found in the cell membrane. Its pathway is cell wall biogenesis; lipoteichoic acid biosynthesis. Functionally, proton-coupled antiporter flippase that catalyzes the translocation, from the inner to the outer leaflet of the cell membrane, of the lipid-linked disaccharide (anchor-LLD) that anchors lipoteichoic acids (LTA) to the cell membrane. The protein is Proton-coupled antiporter flippase LtaA (ltaA) of Staphylococcus aureus (strain USA300).